The sequence spans 350 residues: Transmembrane protein 185A (350 aa).

Helical transmembrane passes span 16-36, 41-61, 81-101, 111-131, 177-197, 211-231, and 240-260; these read LIYA…DGII, WAVF…ASVG, FKAM…EVLV, FWLL…AACV, ILMS…VLFL, ITMA…EILL, and AFSC…LMAT. The tract at residues 298–350 is mediates interaction with MAP1B; that stretch reads DLHHEDSEETEETPVPEPPKIAPMFRKKARVVITQSPGKYVLPPPKLNIEMPD.

Belongs to the TMEM185 family. In terms of assembly, interacts with MAP1B. In terms of tissue distribution, broadly expressed in brain where it is specifically expressed by neurons (at protein level). Also detected in some cells of arterioles, intestine, lung and testis (at protein level).

Its subcellular location is the cell projection. The protein resides in the dendrite. The protein localises to the membrane. The chain is Transmembrane protein 185A (Tmem185a) from Mus musculus (Mouse).